The chain runs to 472 residues: Glutamate--tRNA ligase 2 (472 aa).

The 'HIGH' region signature appears at 12–22 (PSPSGLLHLGN). Positions 253–257 (PLSKR) match the 'KMSKS' region motif. Lys-256 is a binding site for ATP.

Belongs to the class-I aminoacyl-tRNA synthetase family. Glutamate--tRNA ligase type 1 subfamily. In terms of assembly, monomer.

It is found in the cytoplasm. The catalysed reaction is tRNA(Glu) + L-glutamate + ATP = L-glutamyl-tRNA(Glu) + AMP + diphosphate. Its function is as follows. Catalyzes the attachment of glutamate to tRNA(Glu) in a two-step reaction: glutamate is first activated by ATP to form Glu-AMP and then transferred to the acceptor end of tRNA(Glu). This chain is Glutamate--tRNA ligase 2, found in Nitrosococcus oceani (strain ATCC 19707 / BCRC 17464 / JCM 30415 / NCIMB 11848 / C-107).